The chain runs to 872 residues: Bifunctional uridylyltransferase/uridylyl-removing enzyme (872 aa).

The segment at Met-1–Glu-332 is uridylyltransferase. The segment at Leu-333 to Thr-691 is uridylyl-removing. Residues Val-450–Leu-572 enclose the HD domain. ACT domains follow at residues Gln-692–Asn-773 and Leu-799–Glu-872.

It belongs to the GlnD family. Requires Mg(2+) as cofactor.

The enzyme catalyses [protein-PII]-L-tyrosine + UTP = [protein-PII]-uridylyl-L-tyrosine + diphosphate. The catalysed reaction is [protein-PII]-uridylyl-L-tyrosine + H2O = [protein-PII]-L-tyrosine + UMP + H(+). Uridylyltransferase (UTase) activity is inhibited by glutamine, while glutamine activates uridylyl-removing (UR) activity. Its function is as follows. Modifies, by uridylylation and deuridylylation, the PII regulatory proteins (GlnB and homologs), in response to the nitrogen status of the cell that GlnD senses through the glutamine level. Under low glutamine levels, catalyzes the conversion of the PII proteins and UTP to PII-UMP and PPi, while under higher glutamine levels, GlnD hydrolyzes PII-UMP to PII and UMP (deuridylylation). Thus, controls uridylylation state and activity of the PII proteins, and plays an important role in the regulation of nitrogen assimilation and metabolism. The polypeptide is Bifunctional uridylyltransferase/uridylyl-removing enzyme (Pseudoalteromonas translucida (strain TAC 125)).